Reading from the N-terminus, the 348-residue chain is Dihydroorotase (348 aa).

Positions 17 and 19 each coordinate Zn(2+). Residues 19–21 (HLR) and asparagine 45 each bind substrate. Positions 103, 140, and 178 each coordinate Zn(2+). Position 103 is an N6-carboxylysine (lysine 103). Residue histidine 140 participates in substrate binding. Leucine 223 serves as a coordination point for substrate. Residue aspartate 251 coordinates Zn(2+). Aspartate 251 is a catalytic residue. The substrate site is built by histidine 255 and alanine 267.

This sequence belongs to the metallo-dependent hydrolases superfamily. DHOase family. Class II DHOase subfamily. Homodimer. Zn(2+) is required as a cofactor.

It carries out the reaction (S)-dihydroorotate + H2O = N-carbamoyl-L-aspartate + H(+). Its pathway is pyrimidine metabolism; UMP biosynthesis via de novo pathway; (S)-dihydroorotate from bicarbonate: step 3/3. Its function is as follows. Catalyzes the reversible cyclization of carbamoyl aspartate to dihydroorotate. The protein is Dihydroorotase of Escherichia coli O157:H7.